The primary structure comprises 538 residues: RNA-binding protein Ro60 (538 aa).

An N-acetylmethionine modification is found at Met1. 2 positions are modified to phosphoserine: Ser4 and Ser19. The TROVE domain occupies 16–369 (VVNSEGGCVW…TFKTVEPTGK (354 aa)). The RNA-binding stretch occupies residues 120-284 (RIPTHLFTFI…EMPLTALLRN (165 aa)). At Lys224 the chain carries N6-acetyllysine. The tract at residues 361–538 (FKTVEPTGKR…VIRNFTLDVI (178 aa)) is VWFA-like domain. A divalent metal cation-binding residues include Ser378, Ser380, and Thr445.

It belongs to the Ro 60 kDa family. In terms of assembly, identified in a IGF2BP1-dependent mRNP granule complex containing untranslated mRNAs. Found in a complex with PUF60 and Y5 RNA. Interacts with RAB11FIP5. Highest in brain, followed by lung, muscle, kidney and heart. Lower levels are found in testis, liver and spleen.

It is found in the cytoplasm. RNA-binding protein that binds to misfolded non-coding RNAs, pre-5S rRNA, and several small cytoplasmic RNA molecules known as Y RNAs. May play roles in cilia formation and/or maintenance. This Mus musculus (Mouse) protein is RNA-binding protein Ro60.